A 371-amino-acid chain; its full sequence is Cytochrome b (371 aa).

The next 4 helical transmembrane spans lie at 25 to 45 (FGSM…FLAV), 69 to 90 (WMMQ…YIHI), 105 to 125 (WMSG…GYVL), and 170 to 190 (FFAL…LHII). Heme b contacts are provided by histidine 75 and histidine 89. Heme b is bound by residues histidine 174 and histidine 188. Residue histidine 193 coordinates a ubiquinone. A run of 4 helical transmembrane segments spans residues 218–238 (HKDL…VSFF), 280–300 (LGGA…PFTH), 312–332 (LSQL…WAAT), and 339–358 (FIAI…LSIP).

This sequence belongs to the cytochrome b family. The cytochrome bc1 complex contains 3 respiratory subunits (MT-CYB, CYC1 and UQCRFS1), 2 core proteins (UQCRC1 and UQCRC2) and probably 6 low-molecular weight proteins. It depends on heme b as a cofactor.

The protein resides in the mitochondrion inner membrane. Component of the ubiquinol-cytochrome c reductase complex (complex III or cytochrome b-c1 complex) that is part of the mitochondrial respiratory chain. The b-c1 complex mediates electron transfer from ubiquinol to cytochrome c. Contributes to the generation of a proton gradient across the mitochondrial membrane that is then used for ATP synthesis. This chain is Cytochrome b (MT-CYB), found in Liasis olivaceus (Olive python).